The sequence spans 344 residues: Transcription factor HRS1 (344 aa).

Positions I88–R184 are disordered. Positions N95–D104 are enriched in acidic residues. 2 stretches are compositionally biased toward basic and acidic residues: residues E105–W124 and L138–G178. One can recognise an HTH myb-type domain in the interval G178–R238. A DNA-binding region (H-T-H motif) is located at residues P209 to R234. Residues S269 to T291 are compositionally biased toward low complexity. The tract at residues S269–G322 is disordered.

Expressed in the root hair region and root hair cells.

The protein resides in the nucleus. Its function is as follows. Transcription factor involved in nitrate and phosphate signaling in roots. Integrates nitrate and phosphate starvation responses and adaptation of root architecture depending on nutrient availabilities. Acts downstream of the nitrate sensor and transporter NPF6.3/NRT1.1. Represses primary root development in response to phosphate deficiency conditions, only when nitrate is present. Involved in the modulation of primary root and root hair growth in phosphate-deprived environment. May be required for suppressing abscisic acid (ABA) signaling in germinating embryo axis, which promotes the timely germination of seeds. The polypeptide is Transcription factor HRS1 (Arabidopsis thaliana (Mouse-ear cress)).